The primary structure comprises 347 residues: NADH-ubiquinone oxidoreductase chain 2 (347 aa).

Helical transmembrane passes span I13–F33, Y59–V79, I96–P116, I122–L142, V144–I164, I178–M200, L210–H232, I246–I266, I276–L296, and L326–L346.

This sequence belongs to the complex I subunit 2 family. Core subunit of respiratory chain NADH dehydrogenase (Complex I) which is composed of 45 different subunits. Interacts with TMEM242.

The protein localises to the mitochondrion inner membrane. It catalyses the reaction a ubiquinone + NADH + 5 H(+)(in) = a ubiquinol + NAD(+) + 4 H(+)(out). Its function is as follows. Core subunit of the mitochondrial membrane respiratory chain NADH dehydrogenase (Complex I) which catalyzes electron transfer from NADH through the respiratory chain, using ubiquinone as an electron acceptor. Essential for the catalytic activity and assembly of complex I. In Rhynchonycteris naso (Brazilian long-nosed bat), this protein is NADH-ubiquinone oxidoreductase chain 2.